Consider the following 399-residue polypeptide: Succinate--CoA ligase [ADP-forming] subunit beta (399 aa).

The region spanning 9 to 254 (KAVLAEFGAP…ESEEDPKEIE (246 aa)) is the ATP-grasp domain. Residues K46, 53 to 55 (GRG), E109, A112, and E117 each bind ATP. Mg(2+) contacts are provided by N209 and D223. Substrate is bound by residues N274 and 331-333 (GIM).

It belongs to the succinate/malate CoA ligase beta subunit family. As to quaternary structure, heterotetramer of two alpha and two beta subunits. The cofactor is Mg(2+).

It catalyses the reaction succinate + ATP + CoA = succinyl-CoA + ADP + phosphate. It carries out the reaction GTP + succinate + CoA = succinyl-CoA + GDP + phosphate. It functions in the pathway carbohydrate metabolism; tricarboxylic acid cycle; succinate from succinyl-CoA (ligase route): step 1/1. Its function is as follows. Succinyl-CoA synthetase functions in the citric acid cycle (TCA), coupling the hydrolysis of succinyl-CoA to the synthesis of either ATP or GTP and thus represents the only step of substrate-level phosphorylation in the TCA. The beta subunit provides nucleotide specificity of the enzyme and binds the substrate succinate, while the binding sites for coenzyme A and phosphate are found in the alpha subunit. This Caulobacter vibrioides (strain NA1000 / CB15N) (Caulobacter crescentus) protein is Succinate--CoA ligase [ADP-forming] subunit beta.